A 198-amino-acid polypeptide reads, in one-letter code: Probable GTP-binding protein EngB (198 aa).

The 175-residue stretch at 21-195 folds into the EngB-type G domain; it reads NFSEVAFLGR…EDIIINQTLG (175 aa). GTP contacts are provided by residues 29–36, 56–60, 81–84, 151–154, and 174–176; these read GRSNVGKS, GKTQL, DLPG, TKCD, and VSN. Positions 36 and 58 each coordinate Mg(2+).

The protein belongs to the TRAFAC class TrmE-Era-EngA-EngB-Septin-like GTPase superfamily. EngB GTPase family. Mg(2+) serves as cofactor.

Functionally, necessary for normal cell division and for the maintenance of normal septation. This chain is Probable GTP-binding protein EngB, found in Campylobacter jejuni subsp. jejuni serotype O:23/36 (strain 81-176).